Reading from the N-terminus, the 308-residue chain is D-alanine--D-alanine ligase (308 aa).

The 200-residue stretch at 103-302 (KFVFRAAGLP…YGELVSWMVE (200 aa)) folds into the ATP-grasp domain. Residue 130–184 (MDPPYVIKPVSEGSSVGVFIVRAGDNRPPAELTSAEWNLGDEVMAERYIAGRELT) participates in ATP binding. Positions 252, 269, and 271 each coordinate Mg(2+).

Belongs to the D-alanine--D-alanine ligase family. The cofactor is Mg(2+). It depends on Mn(2+) as a cofactor.

It localises to the cytoplasm. The catalysed reaction is 2 D-alanine + ATP = D-alanyl-D-alanine + ADP + phosphate + H(+). Its pathway is cell wall biogenesis; peptidoglycan biosynthesis. In terms of biological role, cell wall formation. This Parvibaculum lavamentivorans (strain DS-1 / DSM 13023 / NCIMB 13966) protein is D-alanine--D-alanine ligase.